Consider the following 306-residue polypeptide: uncharacterized protein (306 aa).

9 helical membrane passes run Val-13–Ile-33, Pro-53–Gly-73, Ile-86–Ala-106, Val-112–Leu-132, Trp-147–Phe-167, Ala-177–Ile-197, Ala-214–Ile-234, Val-246–Phe-268, and Val-272–Leu-294.

It localises to the cell membrane. This is an uncharacterized protein from Bacillus subtilis (strain 168).